Here is a 435-residue protein sequence, read N- to C-terminus: Ribulose bisphosphate carboxylase large chain (435 aa).

K5 is subject to N6,N6,N6-trimethyllysine. Substrate contacts are provided by N114 and T164. Residue K166 is the Proton acceptor of the active site. Substrate is bound at residue K168. The Mg(2+) site is built by K192, D194, and E195. K192 is subject to N6-carboxylysine. H285 functions as the Proton acceptor in the catalytic mechanism. Positions 286, 318, and 370 each coordinate substrate.

Belongs to the RuBisCO large chain family. Type I subfamily. Heterohexadecamer of 8 large chains and 8 small chains; disulfide-linked. The disulfide link is formed within the large subunit homodimers. Requires Mg(2+) as cofactor. In terms of processing, the disulfide bond which can form in the large chain dimeric partners within the hexadecamer appears to be associated with oxidative stress and protein turnover.

It is found in the plastid. Its subcellular location is the chloroplast. It catalyses the reaction 2 (2R)-3-phosphoglycerate + 2 H(+) = D-ribulose 1,5-bisphosphate + CO2 + H2O. The catalysed reaction is D-ribulose 1,5-bisphosphate + O2 = 2-phosphoglycolate + (2R)-3-phosphoglycerate + 2 H(+). In terms of biological role, ruBisCO catalyzes two reactions: the carboxylation of D-ribulose 1,5-bisphosphate, the primary event in carbon dioxide fixation, as well as the oxidative fragmentation of the pentose substrate in the photorespiration process. Both reactions occur simultaneously and in competition at the same active site. In Drosera burmannii (Burmese sundew), this protein is Ribulose bisphosphate carboxylase large chain.